Reading from the N-terminus, the 1207-residue chain is Brassinosteroid LRR receptor kinase (1207 aa).

A signal peptide spans 1–34 (MKAHKTVFNQHPLSLNKLFFVLLLIFFLPPASPA). Positions 71 to 78 (CSFTGVSC) match the Cys pair 1 motif. 20 LRR repeats span residues 109-131 (NLES…AKSQ), 135-157 (TLDS…SSFG), 161-181 (NLKS…EMLK), 186-207 (SLQV…PWVS), 213-234 (ELEF…LDFK), 235-257 (NLSY…KDCS), 258-280 (NLQH…LSSC), 282-304 (KLSF…PSES), 305-325 (LQYL…QLAD), 329-350 (TVVE…SLGE), 353-374 (SLEL…DTLS), 378-400 (NIKT…FSNL), 402-423 (KLET…GICK), 428-450 (NLKV…LSNC), 452-474 (QLVS…LGSL), 476-499 (KLKD…MYLQ), 500-523 (ALEN…SNCT), 524-547 (KLNW…GRLS), 548-570 (NLAI…LGNC), and 572-594 (SLIW…LFKQ). Residue Asn-119 is glycosylated (N-linked (GlcNAc...) asparagine). Asn-166 and Asn-196 each carry an N-linked (GlcNAc...) asparagine glycan. 2 N-linked (GlcNAc...) asparagine glycosylation sites follow: Asn-235 and Asn-245. The N-linked (GlcNAc...) asparagine glycan is linked to Asn-287. 2 N-linked (GlcNAc...) asparagine glycosylation sites follow: Asn-339 and Asn-363. N-linked (GlcNAc...) asparagine glycosylation is found at Asn-412 and Asn-449. Asn-521 carries N-linked (GlcNAc...) asparagine glycosylation. 4 N-linked (GlcNAc...) asparagine glycosylation sites follow: Asn-556, Asn-584, Asn-646, and Asn-662. LRR repeat units lie at residues 664–686 (SMIF…LGAM), 688–711 (YLSI…GGLK), 712–735 (NVAI…TSLT), and 736–758 (LLGE…APFD). Asn-724, Asn-746, and Asn-767 each carry an N-linked (GlcNAc...) asparagine glycan. Residues 771–779 (CGYPLPIPC) carry the Cys pair 2 motif. A helical transmembrane segment spans residues 803–823 (SVAMGLLFSLFCIFGLIIVAI). The Protein kinase domain occupies 888–1163 (FHNDSLVGSG…IQVMAMFKEI (276 aa)). Residues 894-902 (VGSGGFGDV) and Lys-916 contribute to the ATP site. The Proton acceptor role is filled by Asp-1014.

It belongs to the protein kinase superfamily. Ser/Thr protein kinase family.

The protein localises to the cell membrane. The enzyme catalyses L-seryl-[protein] + ATP = O-phospho-L-seryl-[protein] + ADP + H(+). It carries out the reaction L-threonyl-[protein] + ATP = O-phospho-L-threonyl-[protein] + ADP + H(+). Functionally, receptor with a serine/threonine-protein kinase activity. Regulates, in response to brassinosteroid binding, a signaling cascade involved in plant development, including expression of light- and stress-regulated genes, promotion of cell elongation, normal leaf and chloroplast senescence, and flowering. May be involved in a feedback regulation of brassinosteroid biosynthesis. May be also involved in the perception of systemin, a peptide hormone responsible for the systemic activation of defense genes in leaves of wounded plants. This chain is Brassinosteroid LRR receptor kinase (CURL3), found in Solanum lycopersicum (Tomato).